Reading from the N-terminus, the 923-residue chain is Alanine--tRNA ligase (923 aa).

H614, H618, C717, and H721 together coordinate Zn(2+). The interval 884–903 is disordered; it reads KVGGGGGGPPDFAQGGGPDA. Positions 885-901 are enriched in gly residues; the sequence is VGGGGGGPPDFAQGGGP.

The protein belongs to the class-II aminoacyl-tRNA synthetase family. Zn(2+) is required as a cofactor.

It localises to the cytoplasm. The catalysed reaction is tRNA(Ala) + L-alanine + ATP = L-alanyl-tRNA(Ala) + AMP + diphosphate. Functionally, catalyzes the attachment of alanine to tRNA(Ala) in a two-step reaction: alanine is first activated by ATP to form Ala-AMP and then transferred to the acceptor end of tRNA(Ala). Also edits incorrectly charged Ser-tRNA(Ala) and Gly-tRNA(Ala) via its editing domain. The sequence is that of Alanine--tRNA ligase from Haloquadratum walsbyi (strain DSM 16790 / HBSQ001).